A 59-amino-acid polypeptide reads, in one-letter code: Large ribosomal subunit protein bL32c (59 aa).

Positions 36 to 59 (KSRSFSGVSEHPKPKGFSRQQTNK) are disordered.

It belongs to the bacterial ribosomal protein bL32 family.

It is found in the plastid. It localises to the chloroplast. The sequence is that of Large ribosomal subunit protein bL32c from Oryza nivara (Indian wild rice).